The primary structure comprises 147 residues: Hemoglobin subunit beta (147 aa).

Residues 3–147 (EWTDDERAII…VVSALGRQYH (145 aa)) enclose the Globin domain. His64 and His93 together coordinate heme b.

The protein belongs to the globin family. In terms of assembly, heterotetramer of two alpha chains and two beta chains. Red blood cells.

Functionally, involved in oxygen transport from gills to the various peripheral tissues. This chain is Hemoglobin subunit beta (hbb), found in Merlangius merlangus (Whiting).